A 588-amino-acid polypeptide reads, in one-letter code: Zeta-carotene desaturase, chloroplastic/chromoplastic (588 aa).

Residues 1–49 (MATCSAYLCCPATSASLKKRVFPDGSAGFLFFGGRRLSNRLVTPKSVIR) constitute a chloroplast and chromoplast transit peptide.

It belongs to the zeta carotene desaturase family. As to quaternary structure, monomer and dimer. Decylplastoquinone is required as a cofactor. Requires 6-decylubiquinone as cofactor.

The protein localises to the plastid. Its subcellular location is the chloroplast. The protein resides in the chromoplast. The enzyme catalyses 9,9'-di-cis-zeta-carotene + 2 a quinone = 7,7',9,9'-tetra-cis-lycopene + 2 a quinol. The protein operates within carotenoid biosynthesis; lycopene biosynthesis. Its function is as follows. Catalyzes the conversion of zeta-carotene to lycopene via the intermediary of neurosporene. It carries out two consecutive desaturations (introduction of double bonds) at positions C-7 and C-7'. Shows stereoselectivity toward trans C15-C15'zeta-carotene double bond. The zeta-carotene produced by the phytoene desaturase PDS has a C15-C15' double bond in the cis configuration and it requires isomerization before being recognized as substrate by ZDS. No activity with all-trans-zeta-carotene. The main product is 7,9,7',9'-tetra-cis-lycopene (pro-lycopene). The protein is Zeta-carotene desaturase, chloroplastic/chromoplastic (ZDS) of Capsicum annuum (Capsicum pepper).